An 869-amino-acid polypeptide reads, in one-letter code: MSGRDNRGAGGGGGGHQPLSSAMGKLKEKLTRAGDDQGYHRVESNLSTSNTATSLDTILPEDPFLFPQAAPQRHPLPRPQQQQQQQQRQQLRLLEDEPPLSFRPLLEDDDINEPPTQPFQQQQQRTPLRASGSLELTPLPPPPTSQEIREHRDRQQRSVPVPVEDLQRSKQSLKGSRVSFEKNNASSKPPAQAESSDEDSFEDKRIGFQQQKATSVDHKGILKDLKHILANDNRRQFQAKKHVSLDVKGTRFLQDLLKESSSEEEFHKTRREFQGRKHQSLDPRVTFKLDKVLQGSSTDSDEEGDDPEHKRLIHRPKDITKPLIIDLKDLESESDEDFHTSRQHFQQQRSISTDSRKSRRPYEMDEMGNKRGENIRHAVPFVRQITEDGKPKLEVYRPTTNPIYIWTQVLAALSVSLGSLVVGFVSAYTSPALVSMTNRNMTSFEVTPQAASWVGGIMPLAGLAGGIAGGPFIEYLGRRNTILATAIPFIVSSLLIACAVNVAMVLAGRFLAGFCVGIASLSLPVYLGETVQPEVRGTLGLLPTAFGNIGILLCFVAGTYMDWSMLAFLGAALPVPFLILMFLIPETPRWFVSRGREEKARKALSWLRGKEADVEPELKGLMRSQADADRQATQNKMMELLKRNNLKPLSISLGLMFFQQLSGINAVIFYTVSIFKDAGSTIDGNLCTIIVGIVNFMATFIATLLIDRAGRKILLYVSNIAMIITLFVLGGFFYCKSHGQDVSQLGWLPLSCFVIYILGFSLGFGPIPWLMMGEILPSKIRGSAASVATAFNWSCTFVVTKTFQDMIDFMGAHGAFWLFGSICFIGLFFVILYVPETQGKTLEDIERKMMGRVRRMSSVANMKPLAFNM.

Disordered regions lie at residues 1–214 (MSGR…QKAT) and 258–315 (KESS…LIHR). Topologically, residues 1 to 404 (MSGRDNRGAG…VYRPTTNPIY (404 aa)) are cytoplasmic. Basic and acidic residues predominate over residues 25-43 (KLKEKLTRAGDDQGYHRVE). Composition is skewed to low complexity over residues 44–57 (SNLS…SLDT), 79–92 (PQQQ…QQLR), and 118–127 (PFQQQQQRTP). Composition is skewed to basic and acidic residues over residues 147–156 (EIREHRDRQQ) and 258–291 (KESS…KLDK). Residues S260, S261, S262, S332, and S334 each carry the phosphoserine modification. The interval 336-368 (EDFHTSRQHFQQQRSISTDSRKSRRPYEMDEMG) is disordered. Positions 343–353 (QHFQQQRSIST) are enriched in polar residues. Over residues 354 to 368 (DSRKSRRPYEMDEMG) the composition is skewed to basic and acidic residues. The helical transmembrane segment at 405-425 (IWTQVLAALSVSLGSLVVGFV) threads the bilayer. Residues 426-452 (SAYTSPALVSMTNRNMTSFEVTPQAAS) lie on the Extracellular side of the membrane. An N-linked (GlcNAc...) asparagine glycan is attached at N440. A helical membrane pass occupies residues 453–473 (WVGGIMPLAGLAGGIAGGPFI). The Cytoplasmic segment spans residues 474-485 (EYLGRRNTILAT). Residues 486-506 (AIPFIVSSLLIACAVNVAMVL) traverse the membrane as a helical segment. Residues 507 to 509 (AGR) are Extracellular-facing. Residues 510-530 (FLAGFCVGIASLSLPVYLGET) form a helical membrane-spanning segment. Topologically, residues 531–536 (VQPEVR) are cytoplasmic. The helical transmembrane segment at 537–557 (GTLGLLPTAFGNIGILLCFVA) threads the bilayer. Residues 558–564 (GTYMDWS) are Extracellular-facing. The helical transmembrane segment at 565-585 (MLAFLGAALPVPFLILMFLIP) threads the bilayer. Topologically, residues 586-654 (ETPRWFVSRG…NLKPLSISLG (69 aa)) are cytoplasmic. The helical transmembrane segment at 655-675 (LMFFQQLSGINAVIFYTVSIF) threads the bilayer. Residues 676 to 685 (KDAGSTIDGN) are Extracellular-facing. The chain crosses the membrane as a helical span at residues 686–706 (LCTIIVGIVNFMATFIATLLI). Residues 707 to 712 (DRAGRK) lie on the Cytoplasmic side of the membrane. Residues 713–733 (ILLYVSNIAMIITLFVLGGFF) form a helical membrane-spanning segment. Residues 734-752 (YCKSHGQDVSQLGWLPLSC) are Extracellular-facing. Residues 753–773 (FVIYILGFSLGFGPIPWLMMG) form a helical membrane-spanning segment. The Cytoplasmic segment spans residues 774–779 (EILPSK). The chain crosses the membrane as a helical span at residues 780–800 (IRGSAASVATAFNWSCTFVVT). Residues 801–813 (KTFQDMIDFMGAH) lie on the Extracellular side of the membrane. The chain crosses the membrane as a helical span at residues 814–834 (GAFWLFGSICFIGLFFVILYV). The Cytoplasmic segment spans residues 835–869 (PETQGKTLEDIERKMMGRVRRMSSVANMKPLAFNM). A phosphoserine mark is found at S857 and S858.

This sequence belongs to the major facilitator superfamily. Sugar transporter (TC 2.A.1.1) family. Trehalose transporter subfamily.

The protein localises to the cell membrane. In terms of biological role, low-capacity facilitative transporter for trehalose. Does not transport maltose, sucrose or lactose. Mediates the bidirectional transfer of trehalose. Responsible for the transport of trehalose synthesized in the fat body and the incorporation of trehalose into other tissues that require a carbon source, thereby regulating trehalose levels in the hemolymph. The protein is Facilitated trehalose transporter Tret1 of Drosophila persimilis (Fruit fly).